We begin with the raw amino-acid sequence, 508 residues long: Probable cytosol aminopeptidase (508 aa).

Lys-276 and Asp-281 together coordinate Mn(2+). Lys-288 is a catalytic residue. Mn(2+) is bound by residues Asp-299, Asp-358, and Glu-360. The active site involves Arg-362.

The protein belongs to the peptidase M17 family. Mn(2+) serves as cofactor.

The protein resides in the cytoplasm. The catalysed reaction is Release of an N-terminal amino acid, Xaa-|-Yaa-, in which Xaa is preferably Leu, but may be other amino acids including Pro although not Arg or Lys, and Yaa may be Pro. Amino acid amides and methyl esters are also readily hydrolyzed, but rates on arylamides are exceedingly low.. It catalyses the reaction Release of an N-terminal amino acid, preferentially leucine, but not glutamic or aspartic acids.. Functionally, presumably involved in the processing and regular turnover of intracellular proteins. Catalyzes the removal of unsubstituted N-terminal amino acids from various peptides. The sequence is that of Probable cytosol aminopeptidase from Chlorobium luteolum (strain DSM 273 / BCRC 81028 / 2530) (Pelodictyon luteolum).